A 541-amino-acid chain; its full sequence is Membrane protein insertase YidC (541 aa).

5 helical membrane passes run 6–26 (NILLIGLLFVSFLLWQQWQAD), 349–369 (FVGNWGVAIILITLTVRGLLF), 420–440 (GGCLPILLQMPIFIALYWVLL), 457–477 (LSVQDPYYILPLLMGASMFVM), and 500–520 (MIFTVFFLWFPSGLVLYWLVG).

It belongs to the OXA1/ALB3/YidC family. Type 1 subfamily. As to quaternary structure, interacts with the Sec translocase complex via SecD. Specifically interacts with transmembrane segments of nascent integral membrane proteins during membrane integration.

It localises to the cell inner membrane. In terms of biological role, required for the insertion and/or proper folding and/or complex formation of integral membrane proteins into the membrane. Involved in integration of membrane proteins that insert both dependently and independently of the Sec translocase complex, as well as at least some lipoproteins. Aids folding of multispanning membrane proteins. The polypeptide is Membrane protein insertase YidC (Shewanella sp. (strain ANA-3)).